Here is a 231-residue protein sequence, read N- to C-terminus: Small ribosomal subunit protein uS2 (231 aa).

A disordered region spans residues 1–23 (MKVTNLSEKEERGGELTEAEKEE). Positions 7-23 (SEKEERGGELTEAEKEE) are enriched in basic and acidic residues.

The protein belongs to the universal ribosomal protein uS2 family.

The protein is Small ribosomal subunit protein uS2 (rps2) of Saccharolobus solfataricus (strain ATCC 35092 / DSM 1617 / JCM 11322 / P2) (Sulfolobus solfataricus).